The following is a 905-amino-acid chain: Nitrate reductase [NADPH] (905 aa).

The interval 1 to 42 (METSTTTTLLQQERIPENSEPISTHIHTHSLPPTPPGTAKPS) is disordered. Mo-molybdopterin is bound at residue Cys179. A Cytochrome b5 heme-binding domain is found at 546 to 621 (NRKITIEELK…LPTYHIGTLD (76 aa)). The heme site is built by His581 and His604. The FAD-binding FR-type domain maps to 648-759 (KTWSKAILDK…KGPTGKFVYH (112 aa)). Residues 702–705 (RSYT), 719–723 (LIKIY), 733–735 (VMT), Ser783, and Thr786 each bind FAD. An NADP(+)-binding site is contributed by 875-884 (LLLVCGPPPM).

It belongs to the nitrate reductase family. Homodimer. FAD serves as cofactor. The cofactor is heme. Requires Mo-molybdopterin as cofactor.

The enzyme catalyses nitrite + NADP(+) + H2O = nitrate + NADPH + H(+). Nitrate reductase is a key enzyme involved in the first step of nitrate assimilation in plants, fungi and bacteria. The protein is Nitrate reductase [NADPH] (NIA) of Fusarium oxysporum (Fusarium vascular wilt).